A 252-amino-acid polypeptide reads, in one-letter code: Imidazole glycerol phosphate synthase subunit HisF (252 aa).

Residues aspartate 11 and aspartate 130 contribute to the active site.

This sequence belongs to the HisA/HisF family. In terms of assembly, heterodimer of HisH and HisF.

It localises to the cytoplasm. The enzyme catalyses 5-[(5-phospho-1-deoxy-D-ribulos-1-ylimino)methylamino]-1-(5-phospho-beta-D-ribosyl)imidazole-4-carboxamide + L-glutamine = D-erythro-1-(imidazol-4-yl)glycerol 3-phosphate + 5-amino-1-(5-phospho-beta-D-ribosyl)imidazole-4-carboxamide + L-glutamate + H(+). It functions in the pathway amino-acid biosynthesis; L-histidine biosynthesis; L-histidine from 5-phospho-alpha-D-ribose 1-diphosphate: step 5/9. IGPS catalyzes the conversion of PRFAR and glutamine to IGP, AICAR and glutamate. The HisF subunit catalyzes the cyclization activity that produces IGP and AICAR from PRFAR using the ammonia provided by the HisH subunit. This chain is Imidazole glycerol phosphate synthase subunit HisF, found in Streptococcus sanguinis (strain SK36).